The following is a 251-amino-acid chain: Ubiquinone/menaquinone biosynthesis C-methyltransferase UbiE (251 aa).

S-adenosyl-L-methionine-binding positions include threonine 74, aspartate 95, and 123–124; that span reads NA.

This sequence belongs to the class I-like SAM-binding methyltransferase superfamily. MenG/UbiE family.

The catalysed reaction is a 2-demethylmenaquinol + S-adenosyl-L-methionine = a menaquinol + S-adenosyl-L-homocysteine + H(+). It catalyses the reaction a 2-methoxy-6-(all-trans-polyprenyl)benzene-1,4-diol + S-adenosyl-L-methionine = a 5-methoxy-2-methyl-3-(all-trans-polyprenyl)benzene-1,4-diol + S-adenosyl-L-homocysteine + H(+). Its pathway is quinol/quinone metabolism; menaquinone biosynthesis; menaquinol from 1,4-dihydroxy-2-naphthoate: step 2/2. It functions in the pathway cofactor biosynthesis; ubiquinone biosynthesis. Functionally, methyltransferase required for the conversion of demethylmenaquinol (DMKH2) to menaquinol (MKH2) and the conversion of 2-polyprenyl-6-methoxy-1,4-benzoquinol (DDMQH2) to 2-polyprenyl-3-methyl-6-methoxy-1,4-benzoquinol (DMQH2). This is Ubiquinone/menaquinone biosynthesis C-methyltransferase UbiE from Shewanella baltica (strain OS223).